The sequence spans 1788 residues: Glutamine and serine-rich protein 1 (1788 aa).

Residues 1 to 53 (MDAHYAPAGFAEPPAPPASAATQPAAPAWAYEARVPAAASSPSCSGSSPSLKA) show a composition bias toward low complexity. Disordered stretches follow at residues 1 to 69 (MDAH…DVLQ), 472 to 498 (TRDLPSVSESQNYSSGQSQGLSPVSQT), and 532 to 617 (SYSS…SKQD). 4 stretches are compositionally biased toward polar residues: residues 60–69 (PSQSESDVLQ), 478–492 (VSESQNYSSGQSQGL), 532–569 (SYSSASRGQSLPVSTPTPSYTSMHPSPNAQTQGSSAQP), and 576–594 (VQSSFASSTRGQTLQSSIP). A phosphoserine mark is found at serine 670 and serine 940. Threonine 1003 carries the post-translational modification Phosphothreonine. At serine 1041 the chain carries Phosphoserine. 2 disordered regions span residues 1104 to 1163 (QPGD…TDVY) and 1234 to 1264 (IQTTRTFCPPPFAKTSPAAQAPSETGGVSLS). Lysine 1112 participates in a covalent cross-link: Glycyl lysine isopeptide (Lys-Gly) (interchain with G-Cter in SUMO2). Over residues 1126 to 1136 (PKEKAKGKEQG) the composition is skewed to basic and acidic residues. A Glycyl lysine isopeptide (Lys-Gly) (interchain with G-Cter in SUMO2) cross-link involves residue lysine 1137. Phosphoserine occurs at positions 1262, 1281, and 1282. Threonine 1394 is modified (phosphothreonine). Serine 1401 bears the Phosphoserine mark. The segment at 1494-1588 (VCSKKPRNKP…DEGFEPPAPS (95 aa)) is disordered. Residues 1510-1537 (IPSKPSSISKTSDPPVSKTTTTKTPSTK) show a composition bias toward low complexity. The segment covering 1545-1561 (IKAEPPPKKRKKWKEEF) has biased composition (basic and acidic residues). The segment covering 1562–1575 (SSSQSESSPEVRSS) has biased composition (low complexity).

As to quaternary structure, interacts with TET1.

It localises to the chromosome. In terms of biological role, plays an essential role in the protection and maintenance of transcriptional and developmental programs. Protects many bivalent promoters and poised enhancers from hypermethylation, showing a marked preference for these regulatory elements over other types of promoters or enhancers. Mechanistically, cooperates with TET1 and binds to DNA in a common complex to inhibit the binding of DNMT3A/3B and therefore de novo methylation. The polypeptide is Glutamine and serine-rich protein 1 (Mus musculus (Mouse)).